Here is a 242-residue protein sequence, read N- to C-terminus: uncharacterized protein (242 aa).

Residues 2–62 (EKAYKILSVQ…VEKPSVIFED (61 aa)) enclose the S4 RNA-binding domain. Aspartate 93 is a catalytic residue.

The protein belongs to the pseudouridine synthase RluA family.

It carries out the reaction a uridine in RNA = a pseudouridine in RNA. This is an uncharacterized protein from Helicobacter pylori (strain ATCC 700392 / 26695) (Campylobacter pylori).